The sequence spans 236 residues: Eukaryotic translation initiation factor 3 subunit J (236 aa).

The interval 20–88 is disordered; sequence ANNINKWEGE…AEEEKRLANL (69 aa). Acidic residues predominate over residues 28–46; the sequence is GEDDDEDVKESWEDEEEKK. Basic and acidic residues-rich tracts occupy residues 47-58 and 68-88; these read DEEKPTKTEVPV and AKLE…LANL.

Belongs to the eIF-3 subunit J family. As to quaternary structure, component of the eukaryotic translation initiation factor 3 (eIF-3) complex. The eIF-3 complex interacts with pix.

The protein resides in the cytoplasm. Its function is as follows. Component of the eukaryotic translation initiation factor 3 (eIF-3) complex, which is involved in protein synthesis of a specialized repertoire of mRNAs and, together with other initiation factors, stimulates binding of mRNA and methionyl-tRNAi to the 40S ribosome. The eIF-3 complex specifically targets and initiates translation of a subset of mRNAs involved in cell proliferation. The polypeptide is Eukaryotic translation initiation factor 3 subunit J (Drosophila willistoni (Fruit fly)).